We begin with the raw amino-acid sequence, 557 residues long: Urocanate hydratase (557 aa).

The tract at residues 1-20 (MSNPRHNEREVRSPRGDELN) is disordered. Residues 52–53 (GG), Gln-130, 176–178 (GMG), Glu-196, Arg-201, 242–243 (NA), 263–267 (QTSAH), 273–274 (YL), and Tyr-322 contribute to the NAD(+) site. The active site involves Cys-410. Gly-492 is an NAD(+) binding site.

This sequence belongs to the urocanase family. It depends on NAD(+) as a cofactor.

Its subcellular location is the cytoplasm. The catalysed reaction is 4-imidazolone-5-propanoate = trans-urocanate + H2O. Its pathway is amino-acid degradation; L-histidine degradation into L-glutamate; N-formimidoyl-L-glutamate from L-histidine: step 2/3. Functionally, catalyzes the conversion of urocanate to 4-imidazolone-5-propionate. This chain is Urocanate hydratase, found in Brucella melitensis biotype 1 (strain ATCC 23456 / CCUG 17765 / NCTC 10094 / 16M).